A 572-amino-acid polypeptide reads, in one-letter code: Glutathione hydrolase 5 proenzyme (572 aa).

Topologically, residues 1-6 are cytoplasmic; the sequence is MAWGHR. A helical; Signal-anchor for type II membrane protein transmembrane segment spans residues 7–29; the sequence is TTVCLVLLGVSLGLAIIVLAVVL. Topologically, residues 30 to 572 are extracellular; sequence PHHQASCRPD…LRKAGKASGY (543 aa). Residue N98 is glycosylated (N-linked (GlcNAc...) asparagine). R110 serves as a coordination point for L-glutamate. 7 N-linked (GlcNAc...) asparagine glycosylation sites follow: N185, N194, N204, N277, N303, N347, and N377. T388 serves as the catalytic Nucleophile. Residues T406, E427, and 453–454 each bind L-glutamate; that span reads SS.

It belongs to the gamma-glutamyltransferase family. As to quaternary structure, heterodimer composed of the light and heavy chains. The active site is located in the light chain. Cleaved by autocatalysis into a large and a small subunit. In terms of processing, glycosylated. In terms of tissue distribution, widely expressed, but at low level, except in the airway epithelial cells. Detected in brain, heart, kidney, liver, lung, spleen, testis and trachea.

It localises to the membrane. The catalysed reaction is glutathione + H2O = L-cysteinylglycine + L-glutamate. The enzyme catalyses an S-substituted glutathione + H2O = an S-substituted L-cysteinylglycine + L-glutamate. It catalyses the reaction leukotriene C4 + H2O = leukotriene D4 + L-glutamate. It carries out the reaction S-[(2E,6E,10E)-geranylgeranyl]-L-glutathione + H2O = S-[(2E,6E,10E)-geranylgeranyl]-L-cysteinylglycine + L-glutamate. The catalysed reaction is an N-terminal (5-L-glutamyl)-[peptide] + an alpha-amino acid = 5-L-glutamyl amino acid + an N-terminal L-alpha-aminoacyl-[peptide]. Its pathway is lipid metabolism; leukotriene D4 biosynthesis. It functions in the pathway sulfur metabolism; glutathione metabolism. With respect to regulation, inhibited by serine-borate. In terms of biological role, cleaves the gamma-glutamyl bond of extracellular glutathione tripeptide (gamma-Glu-Cys-Gly) and certain glutathione conjugates. Hydrolyzes glutathione releasing L-Glu and Cys-Gly dipeptide which is further metabolized to maintain extracellular cysteine levels but also to provide cysteine necessary for intracellular glutathione synthesis. Among glutathione-S-conjugates metabolizes leukotriene C4 (LTC4) and S-geranylgeranyl-glutathione (GGG), but is inactive toward gamma-glutamyl leucine. Converts extracellular LTC4 to LTD4 during acute inflammatory response. Acts as a negative regulator of GGG bioactivity. GGT5 (via GGG catabolism) and ABCC1 (via extracellular transport) establish GGG gradients within lymphoid tissues to position P2RY8-positive lymphocytes at germinal centers in lymphoid follicles and restrict their chemotactic transmigration from blood vessels to bone marrow parenchyma. The transpeptidation reaction, i.e. the transfer of gamma-glutamyl moiety to an acceptor molecule to yield a new gamma-glutamyl compound requires high concentration of dipeptide acceptor and is considered nonphysiological. In Rattus norvegicus (Rat), this protein is Glutathione hydrolase 5 proenzyme (Ggt5).